Consider the following 704-residue polypeptide: MPPNGAITTTPRSRMPPTTPSSGKSRPKKETLHYLAASSSTTSVDAARTLLERGANVNAIDRDGATPLHYACTHDNVAMAQLLLTFGADPMSADKLGRTAYSIAKGNTLRFLRRYKKSSNRQRLGFFRRFFACHSRNETFFIVRNNQEVAPLRPTALAEAASISFNRGNVLTNSYRCAKKKIRATFHAIRRSRSNSTATLQDVVLTSEGIRTVTTPSRRAPKATVYAKRSMSVSDLLLIPDRRDIKNEDVKTRGSPVKKTRGTGRSRTPEAILNPRKQRTPVNHHKRSKSQETKLVAMPSPNSMAYYNTSRARNAGLRPAPSAPPLSPEPAIAAVKTPKTPTTPKTSKGRSKSPANTTAYFTADESLELLGNNMEKLNIESKSAKSSKLKTPSKPTTSSSTSFSSAEDDKEAEVSTPTTVDDGEIRKIRRLREGELKSELKKFGISPAGPLDARTRRLYEKKLLIERRKITNRGYSPDADVVSCRNSPQLELVLRNGFLPADFASRARKCDENVRSEFSGNGFGYNAFCYLIMDPRILGSNVENLTLETFVRSIFYVGKGSKNRPLAHFIDARNERRDKLDKLKTCEKLKTIDELWTLGFGIPRHEISHGVSDEEAFVREASIIEAVKLKNLRNKKAGEFHGTTKSWDNITKSEYGTFLLDRALSTLKLEGIRLITEDNLPDSLYPYVNNRRGAGGGRTPKTPK.

The segment at 1–29 (MPPNGAITTTPRSRMPPTTPSSGKSRPKK) is disordered. Residues 8–22 (TTTPRSRMPPTTPSS) are compositionally biased toward low complexity. ANK repeat units follow at residues 28–59 (KKET…NVNA) and 63–93 (DGAT…PMSA). Disordered stretches follow at residues 247–293 (NEDV…SQET), 314–358 (NAGL…ANTT), and 381–421 (SKSA…TTVD). Over residues 276–288 (RKQRTPVNHHKRS) the composition is skewed to basic residues. Composition is skewed to low complexity over residues 329–346 (EPAI…TPKT) and 384–405 (AKSS…SFSS). The 46-residue stretch at 425–470 (IRKIRRLREGELKSELKKFGISPAGPLDARTRRLYEKKLLIERRKI) folds into the LEM domain. The 111-residue stretch at 525-635 (YNAFCYLIMD…AVKLKNLRNK (111 aa)) folds into the GIY-YIG domain.

Phosphorylated. Phosphorylated during telophase when localized at the midbody.

The protein localises to the cytoplasm. Its subcellular location is the nucleus. It localises to the chromosome. It is found in the midbody. The protein resides in the cytoskeleton. The protein localises to the spindle. With respect to regulation, inhibited by EDTA. In terms of biological role, endonuclease which, in association with baf-1, plays an essential role during embryogenesis in the DNA repair response following DNA damage probably by ensuring proper chromosome segregation. Also required during postembryonic cell divisions after DNA damage caused by ionizing radiation to ensure normal cell proliferation. Resolves chromatin bridges in late mitosis that result from incomplete DNA replication, defective chromosome condensation or unresolved recombination intermediates. Together with brc-1, contributes to genome integrity by resolving mitotic chromatin bridges that result from incomplete processing of DNA breaks. In parallel to the slx-1/mus-81 pathway, acts in processing early recombination intermediates in meiotic prophase I to prevent illegitimate recombination. Also involved in processing remaining, erroneous recombination intermediates that persist into the second meiotic division. The sequence is that of Ankyrin repeat and LEM domain-containing protein 1 homolog from Caenorhabditis elegans.